The sequence spans 235 residues: Adenosine 5'-phosphosulfate reductase (235 aa).

The [4Fe-4S] cluster site is built by Cys-121, Cys-122, Cys-204, and Cys-207. Cys-230 serves as the catalytic Nucleophile; cysteine thiosulfonate intermediate.

This sequence belongs to the PAPS reductase family. CysH subfamily. Requires [4Fe-4S] cluster as cofactor.

The protein resides in the cytoplasm. The catalysed reaction is [thioredoxin]-disulfide + sulfite + AMP + 2 H(+) = adenosine 5'-phosphosulfate + [thioredoxin]-dithiol. It participates in sulfur metabolism; hydrogen sulfide biosynthesis; sulfite from sulfate. Functionally, catalyzes the formation of sulfite from adenosine 5'-phosphosulfate (APS) using thioredoxin as an electron donor. In Geobacillus kaustophilus (strain HTA426), this protein is Adenosine 5'-phosphosulfate reductase.